The following is a 104-amino-acid chain: Large ribosomal subunit protein uL24 (104 aa).

It belongs to the universal ribosomal protein uL24 family. Part of the 50S ribosomal subunit.

Functionally, one of two assembly initiator proteins, it binds directly to the 5'-end of the 23S rRNA, where it nucleates assembly of the 50S subunit. One of the proteins that surrounds the polypeptide exit tunnel on the outside of the subunit. This Bartonella tribocorum (strain CIP 105476 / IBS 506) protein is Large ribosomal subunit protein uL24.